Consider the following 545-residue polypeptide: Adenine deaminase (545 aa).

Belongs to the metallo-dependent hydrolases superfamily. Adenine deaminase family. Requires Mn(2+) as cofactor.

It catalyses the reaction adenine + H2O + H(+) = hypoxanthine + NH4(+). The polypeptide is Adenine deaminase (Salinibacter ruber (strain DSM 13855 / M31)).